A 255-amino-acid polypeptide reads, in one-letter code: Small ribosomal subunit protein eS1 (255 aa).

Basic residues predominate over residues 1–18 (MAVGKNKRLSKGKKGLKK). A disordered region spans residues 1 to 28 (MAVGKNKRLSKGKKGLKKRTQDPFSRKD). Ala-2 carries the N-acetylalanine; partial modification. Residues 19-28 (RTQDPFSRKD) are compositionally biased toward basic and acidic residues.

It belongs to the eukaryotic ribosomal protein eS1 family. In terms of assembly, component of the small ribosomal subunit. Mature ribosomes consist of a small (40S) and a large (60S) subunit. The 40S subunit contains about 33 different proteins and 1 molecule of RNA (18S). The 60S subunit contains about 49 different proteins and 3 molecules of RNA (25S, 5.8S and 5S).

Its subcellular location is the cytoplasm. The protein is Small ribosomal subunit protein eS1 of Ajellomyces dermatitidis (strain ER-3 / ATCC MYA-2586) (Blastomyces dermatitidis).